The sequence spans 89 residues: Small ribosomal subunit protein uS15 (89 aa).

It belongs to the universal ribosomal protein uS15 family. In terms of assembly, part of the 30S ribosomal subunit. Forms a bridge to the 50S subunit in the 70S ribosome, contacting the 23S rRNA.

Its function is as follows. One of the primary rRNA binding proteins, it binds directly to 16S rRNA where it helps nucleate assembly of the platform of the 30S subunit by binding and bridging several RNA helices of the 16S rRNA. Forms an intersubunit bridge (bridge B4) with the 23S rRNA of the 50S subunit in the ribosome. This is Small ribosomal subunit protein uS15 from Shewanella frigidimarina (strain NCIMB 400).